Here is a 463-residue protein sequence, read N- to C-terminus: tRNA-2-methylthio-N(6)-dimethylallyladenosine synthase (463 aa).

The MTTase N-terminal domain occupies 19-135 (GSYWITTFGC…LESLLNQVDS (117 aa)). Positions 28, 64, 98, 170, 174, and 177 each coordinate [4Fe-4S] cluster. A Radical SAM core domain is found at 156–393 (RDSSFCGWVN…NSLVENIAKE (238 aa)). In terms of domain architecture, TRAM spans 396 to 463 (QRYKNTSQEI…RPFSLTAKLL (68 aa)).

It belongs to the methylthiotransferase family. MiaB subfamily. As to quaternary structure, monomer. [4Fe-4S] cluster is required as a cofactor.

It localises to the cytoplasm. It carries out the reaction N(6)-dimethylallyladenosine(37) in tRNA + (sulfur carrier)-SH + AH2 + 2 S-adenosyl-L-methionine = 2-methylsulfanyl-N(6)-dimethylallyladenosine(37) in tRNA + (sulfur carrier)-H + 5'-deoxyadenosine + L-methionine + A + S-adenosyl-L-homocysteine + 2 H(+). Its function is as follows. Catalyzes the methylthiolation of N6-(dimethylallyl)adenosine (i(6)A), leading to the formation of 2-methylthio-N6-(dimethylallyl)adenosine (ms(2)i(6)A) at position 37 in tRNAs that read codons beginning with uridine. The sequence is that of tRNA-2-methylthio-N(6)-dimethylallyladenosine synthase from Prochlorococcus marinus (strain NATL1A).